The sequence spans 290 residues: Virginiamycin B lyase (290 aa).

Residue His-226 coordinates substrate. Glu-265 contacts Mg(2+). His-267 serves as the catalytic Proton acceptor. Glu-282 lines the Mg(2+) pocket.

It belongs to the Vgb family. In terms of assembly, monomer. Mg(2+) serves as cofactor.

Its function is as follows. Inactivates the type B streptogramin antibiotics by linearizing the lactone ring at the ester linkage, generating a free phenylglycine carboxylate and converting the threonyl moiety into 2-amino-butenoic acid. In Mycolicibacterium vanbaalenii (strain DSM 7251 / JCM 13017 / BCRC 16820 / KCTC 9966 / NRRL B-24157 / PYR-1) (Mycobacterium vanbaalenii), this protein is Virginiamycin B lyase.